We begin with the raw amino-acid sequence, 301 residues long: tRNA dimethylallyltransferase 1 (301 aa).

10–17 is a binding site for ATP; that stretch reads GPTASGKT. Residue 12–17 coordinates substrate; sequence TASGKT. The tract at residues 35–38 is interaction with substrate tRNA; the sequence is DSRQ.

The protein belongs to the IPP transferase family. Monomer. Requires Mg(2+) as cofactor.

The enzyme catalyses adenosine(37) in tRNA + dimethylallyl diphosphate = N(6)-dimethylallyladenosine(37) in tRNA + diphosphate. Catalyzes the transfer of a dimethylallyl group onto the adenine at position 37 in tRNAs that read codons beginning with uridine, leading to the formation of N6-(dimethylallyl)adenosine (i(6)A). The sequence is that of tRNA dimethylallyltransferase 1 from Geotalea uraniireducens (strain Rf4) (Geobacter uraniireducens).